A 269-amino-acid polypeptide reads, in one-letter code: GTP cyclohydrolase FolE2 (269 aa).

Belongs to the GTP cyclohydrolase IV family.

It catalyses the reaction GTP + H2O = 7,8-dihydroneopterin 3'-triphosphate + formate + H(+). The protein operates within cofactor biosynthesis; 7,8-dihydroneopterin triphosphate biosynthesis; 7,8-dihydroneopterin triphosphate from GTP: step 1/1. In terms of biological role, converts GTP to 7,8-dihydroneopterin triphosphate. In Burkholderia ambifaria (strain MC40-6), this protein is GTP cyclohydrolase FolE2.